The primary structure comprises 248 residues: Ribosomal RNA small subunit methyltransferase G (248 aa).

Residues G93, L98, 143–144 (AE), and R161 each bind S-adenosyl-L-methionine.

The protein belongs to the methyltransferase superfamily. RNA methyltransferase RsmG family.

It is found in the cytoplasm. Specifically methylates the N7 position of guanine in position 518 of 16S rRNA. The polypeptide is Ribosomal RNA small subunit methyltransferase G (Mycobacterium leprae (strain Br4923)).